A 228-amino-acid polypeptide reads, in one-letter code: Thermonuclease (228 aa).

Positions 1–23 (MTEYLLSAGICMAIVSILLIGMA) are cleaved as a signal peptide. The propeptide occupies 24 to 60 (ISNVSKGQYAKRFFFFATSCLVLTLVVVSSLSSSANA). Asp100 serves as a coordination point for Ca(2+). Arg114 is an active-site residue. 2 residues coordinate Ca(2+): Asp119 and Thr120. Active-site residues include Glu122 and Arg166.

Belongs to the thermonuclease family. Ca(2+) serves as cofactor.

It localises to the secreted. The catalysed reaction is Endonucleolytic cleavage to nucleoside 3'-phosphates and 3'-phosphooligonucleotide end-products.. In terms of biological role, enzyme that catalyzes the hydrolysis of both DNA and RNA at the 5' position of the phosphodiester bond. The protein is Thermonuclease (nuc) of Staphylococcus aureus (strain MSSA476).